The sequence spans 607 residues: UvrABC system protein C (607 aa).

The region spanning 15-94 (ENPGVYLMKN…IKRHRPYFNV (80 aa)) is the GIY-YIG domain. A UVR domain is found at 204-239 (DQVLKLLIRLMNEASARLDYETAALRRDQIASIKEV).

The protein belongs to the UvrC family. In terms of assembly, interacts with UvrB in an incision complex.

The protein localises to the cytoplasm. Functionally, the UvrABC repair system catalyzes the recognition and processing of DNA lesions. UvrC both incises the 5' and 3' sides of the lesion. The N-terminal half is responsible for the 3' incision and the C-terminal half is responsible for the 5' incision. The protein is UvrABC system protein C of Dehalococcoides mccartyi (strain CBDB1).